Consider the following 421-residue polypeptide: MDLENKVKKMGLGHEQGFGAPCLKCKEKCEGFELHFWRKICRNCKCGQEEHDVLLSNEEDRKVGKLFEDTKYTTLIAKLKSDGIPMYKRNVMILTNPVAAKKNVSINTVTYEWAPPVQNQALARQYMQMLPKEKQPVAGSEGAQYRKKQLAKQLPAHDQDPSKCHELSPREVKEMEQFVKKYKSEALGVGDVKLPCEMDAQGPKQMNIPGGDRSTPAAVGAMEDKSAEHKRTQYSCYCCKLSMKEGDPAIYAERAGYDKLWHPACFVCSTCHELLVDMIYFWKNEKLYCGRHYCDSEKPRCAGCDELIFSNEYTQAENQNWHLKHFCCFDCDSILAGEIYVMVNDKPVCKPCYVKNHAVVCQGCHNAIDPEVQRVSYNNFSWHASTECFLCSCCSKCLIGQKFMPVEGMVFCSVECKKMMS.

Positions 92 to 199 constitute a PET domain; it reads MILTNPVAAK…GDVKLPCEMD (108 aa). The segment at 133 to 164 is disordered; it reads EKQPVAGSEGAQYRKKQLAKQLPAHDQDPSKC. Over residues 155–164 the composition is skewed to basic and acidic residues; that stretch reads PAHDQDPSKC. 3 LIM zinc-binding domains span residues 234-297, 299-359, and 362-421; these read YSCY…CDSE, PRCA…NHAV, and QGCH…KMMS.

Belongs to the prickle / espinas / testin family. Interacts via LIM domain 1 with ZYX. Interacts (via LIM domain 3) with ENAH and VASP. Interacts with ALKBH4, talin, actin, alpha-actinin, GRIP1 and PXN. Interacts (via LIM domain 2) with ACTL7A (via N-terminus). Heterodimer with ACTL7A; the heterodimer interacts with ENAH to form a heterotrimer.

The protein localises to the cytoplasm. Its subcellular location is the cell junction. It localises to the focal adhesion. In terms of biological role, scaffold protein that may play a role in cell adhesion, cell spreading and in the reorganization of the actin cytoskeleton. Plays a role in the regulation of cell proliferation. May act as a tumor suppressor. This is Testin (TES) from Papio anubis (Olive baboon).